Reading from the N-terminus, the 195-residue chain is Imidazoleglycerol-phosphate dehydratase (195 aa).

It belongs to the imidazoleglycerol-phosphate dehydratase family.

It is found in the cytoplasm. It carries out the reaction D-erythro-1-(imidazol-4-yl)glycerol 3-phosphate = 3-(imidazol-4-yl)-2-oxopropyl phosphate + H2O. It participates in amino-acid biosynthesis; L-histidine biosynthesis; L-histidine from 5-phospho-alpha-D-ribose 1-diphosphate: step 6/9. This Acetivibrio thermocellus (strain ATCC 27405 / DSM 1237 / JCM 9322 / NBRC 103400 / NCIMB 10682 / NRRL B-4536 / VPI 7372) (Clostridium thermocellum) protein is Imidazoleglycerol-phosphate dehydratase.